The primary structure comprises 55 residues: Large ribosomal subunit protein bL33A (55 aa).

Belongs to the bacterial ribosomal protein bL33 family.

The polypeptide is Large ribosomal subunit protein bL33A (Mycolicibacterium vanbaalenii (strain DSM 7251 / JCM 13017 / BCRC 16820 / KCTC 9966 / NRRL B-24157 / PYR-1) (Mycobacterium vanbaalenii)).